Here is a 192-residue protein sequence, read N- to C-terminus: 7-methyl-GTP pyrophosphatase (192 aa).

Asp69 acts as the Proton acceptor in catalysis.

This sequence belongs to the Maf family. YceF subfamily. The cofactor is a divalent metal cation.

The protein localises to the cytoplasm. It carries out the reaction N(7)-methyl-GTP + H2O = N(7)-methyl-GMP + diphosphate + H(+). Nucleoside triphosphate pyrophosphatase that hydrolyzes 7-methyl-GTP (m(7)GTP). May have a dual role in cell division arrest and in preventing the incorporation of modified nucleotides into cellular nucleic acids. In Pseudomonas savastanoi pv. phaseolicola (strain 1448A / Race 6) (Pseudomonas syringae pv. phaseolicola (strain 1448A / Race 6)), this protein is 7-methyl-GTP pyrophosphatase.